The following is a 354-amino-acid chain: Allantoicase (354 aa).

It belongs to the allantoicase family.

It carries out the reaction allantoate + H2O = (S)-ureidoglycolate + urea. It participates in nitrogen metabolism; (S)-allantoin degradation; (S)-ureidoglycolate from allantoate (aminidohydrolase route): step 1/1. Functionally, utilization of purines as secondary nitrogen sources, when primary sources are limiting. The sequence is that of Allantoicase (alc-1) from Neurospora crassa (strain ATCC 24698 / 74-OR23-1A / CBS 708.71 / DSM 1257 / FGSC 987).